A 249-amino-acid polypeptide reads, in one-letter code: 2,3-bisphosphoglycerate-dependent phosphoglycerate mutase (249 aa).

Substrate is bound by residues 9–16 (RHGQSQWN), 22–23 (TG), arginine 61, 88–91 (ERHY), lysine 99, 115–116 (RR), and 184–185 (GN). Histidine 10 serves as the catalytic Tele-phosphohistidine intermediate. Glutamate 88 serves as the catalytic Proton donor/acceptor.

The protein belongs to the phosphoglycerate mutase family. BPG-dependent PGAM subfamily. In terms of assembly, homodimer.

It carries out the reaction (2R)-2-phosphoglycerate = (2R)-3-phosphoglycerate. It participates in carbohydrate degradation; glycolysis; pyruvate from D-glyceraldehyde 3-phosphate: step 3/5. Catalyzes the interconversion of 2-phosphoglycerate and 3-phosphoglycerate. This chain is 2,3-bisphosphoglycerate-dependent phosphoglycerate mutase, found in Xanthomonas oryzae pv. oryzae (strain PXO99A).